A 355-amino-acid chain; its full sequence is Protein AMBP (355 aa).

The 3-hydroxy-L-kynurenine site is built by C55 and K138. C92 and C189 are oxidised to a cystine. N145 is a glycosylation site (N-linked (GlcNAc...) asparagine). Position 150 (K150) interacts with 3-hydroxy-L-kynurenine. N-linked (GlcNAc...) asparagine glycans are attached at residues N231 and N255. Disulfide bonds link C236-C286, C245-C269, C261-C282, C292-C342, C301-C325, and C317-C338. BPTI/Kunitz inhibitor domains follow at residues 236–286 (CKAA…LQRC) and 292–342 (CRLP…QEYC).

It in the N-terminal section; belongs to the calycin superfamily. Lipocalin family. As to quaternary structure, I-alpha-I plasma protease inhibitors are assembled from one or two heavy chains (H1, H2 or H3) and one light chain, bikunin. Inter-alpha-inhibitor (I-alpha-I) is composed of H1, H2 and bikunin, inter-alpha-like inhibitor (I-alpha-LI) of H2 and bikunin, and pre-alpha-inhibitor (P-alpha-I) of H3 and bikunin. Post-translationally, the precursor is proteolytically processed into two separately functioning proteins. 3-hydroxykynurenine, an oxidized tryptophan metabolite that is common in biological fluids, reacts with Cys-55, Lys-138, and Lys-150 to form heterogeneous polycyclic chromophores including hydroxanthommatin. The reaction by alpha-1-microglobulin is autocatalytic. The chromophore can react with accessible cysteines forming non-reducible thioether cross-links with other molecules of alpha-1-microglobulin or with other proteins. Expressed by the liver and secreted in plasma.

It localises to the secreted. The polypeptide is Protein AMBP (Pleuronectes platessa (European plaice)).